The sequence spans 489 residues: Cytochrome P450 monooxygenase ataF (489 aa).

A helical transmembrane segment spans residues 12–32; that stretch reads WLEHSAVIATLFAFGTALFLV. Asn289 carries N-linked (GlcNAc...) asparagine glycosylation. Position 434 (Cys434) interacts with heme.

It belongs to the cytochrome P450 family. Heme is required as a cofactor.

It is found in the membrane. It functions in the pathway mycotoxin biosynthesis. Its function is as follows. Cytochrome P450 monooxygenase; part of the gene cluster that mediates the biosynthesis of acetylaranotin, a member of the epipolythiodioxopiperazine (ETP) class of toxins characterized by a disulfide-bridged cyclic dipeptide. The first step of acetylaranotin biosynthesis is performed by the NRPS ataP which produces diketopiperazine cyclo-L-Phe-L-Phe via the condensation of 2 phenylalanines (L-Phe). The ataC domain of ataTC then catalyzes the formation of bishydroxylation of cyclo-L-Phe-L-Phe. The glutathione S-transferase domain ataG in ataIMG further catalyzes the conjugation of two glutathiones to the bishydroxylated intermediate. Next, the dipeptidase ataJ removes the Glu residues. The following step is performed by the carbon sulfur lyase domain ataI of ataIMG which may convert the bis-cysteinyl adduct to yield an epidithiol intermediate. The ataT domain from ataTC then catalyzes the oxidation of the free dithiols, followed by a cyclization step catalyzed by the cytochrome P450 ataF. AtaF probably acts as an epoxidase to promote a dual epoxidation formation at C8 and C9 along with C8' and C9', followed by the spontaneous nucleophilic attack of the amide nitrogens N10 and N10' to yield an intermediate with the pyrrolidine partial structure. The final steps of acetylaranotin biosynthesis involve the acetylation and ring rearrangement of an epitetrathiodiketopiperazine intermediate to produce acetylaranotin. AtaH probably catalyzes the acetylation of epitetrathiodiketopiperazine to produce a diacetate and ataY is responsible for the formation of the dihydrooxepin moiety that converts the diacetate intermediate to acetylaranotin via acetylapoaranotin. Both enzymes could function independently in the absence of the other. The acetylaranotin bis-thiomethyltransferase ataS located outside of acetylaranotin gene cluster is the main thiomethyltransferase responsible for converting acetylaranotin and its related intermediates to their methylated forms. The chain is Cytochrome P450 monooxygenase ataF from Aspergillus terreus (strain NIH 2624 / FGSC A1156).